The sequence spans 246 residues: Exosome complex component SKI6 (246 aa).

This sequence belongs to the RNase PH family. Component of the RNA exosome complex. Specifically part of the catalytically inactive RNA exosome core complex (Exo-9) which may associate with the catalytic subunits RRP6 and DIS3 in cytoplasmic- and nuclear-specific RNA exosome complex forms. Exo-9 is formed by a hexameric base ring of RNase PH domain-containing subunits and a cap ring consisting of CSL4, RRP4 and RRP40.

The protein resides in the cytoplasm. It localises to the nucleus. The protein localises to the nucleolus. Its function is as follows. Non-catalytic component of the RNA exosome complex which has 3'-&gt;5' exoribonuclease activity and participates in a multitude of cellular RNA processing and degradation events. In the nucleus, the RNA exosome complex is involved in proper maturation of stable RNA species such as rRNA, snRNA and snoRNA, in the elimination of RNA processing by-products and non-coding 'pervasive' transcripts, such as antisense RNA species and cryptic unstable transcripts (CUTs), and of mRNAs with processing defects, thereby limiting or excluding their export to the cytoplasm. In the cytoplasm, the RNA exosome complex is involved in general mRNA turnover and in RNA surveillance pathways, preventing translation of aberrant mRNAs. The catalytic inactive RNA exosome core complex of 9 subunits (Exo-9) is proposed to play a pivotal role in the binding and presentation of RNA for ribonucleolysis, and to serve as a scaffold for the association with catalytic subunits and accessory proteins or complexes. SKI6 is part of the hexameric ring of RNase PH domain-containing subunits proposed to form a central channel which threads RNA substrates for degradation. The chain is Exosome complex component SKI6 (SKI6) from Saccharomyces cerevisiae (strain ATCC 204508 / S288c) (Baker's yeast).